The chain runs to 151 residues: Ribosome maturation factor RimP (151 aa).

The protein belongs to the RimP family.

The protein localises to the cytoplasm. In terms of biological role, required for maturation of 30S ribosomal subunits. This is Ribosome maturation factor RimP from Alcanivorax borkumensis (strain ATCC 700651 / DSM 11573 / NCIMB 13689 / SK2).